The chain runs to 59 residues: Large ribosomal subunit protein bL35 (59 aa).

2 disordered regions span residues 1–22 and 30–49; these read MKVK…IKRK and APHK…TVSA. Over residues 30–43 the composition is skewed to basic residues; the sequence is APHKTTKQKRHLRK.

The protein belongs to the bacterial ribosomal protein bL35 family.

The sequence is that of Large ribosomal subunit protein bL35 (rpmI) from Mycoplasma pneumoniae (strain ATCC 29342 / M129 / Subtype 1) (Mycoplasmoides pneumoniae).